A 222-amino-acid chain; its full sequence is 3,4-dihydroxy-2-butanone 4-phosphate synthase (222 aa).

Residues 37-38 (RE), Asp42, 150-154 (RPGHT), and Glu174 contribute to the D-ribulose 5-phosphate site. Glu38 serves as a coordination point for Mg(2+). Mg(2+) is bound at residue His153.

The protein belongs to the DHBP synthase family. In terms of assembly, homodimer. It depends on Mg(2+) as a cofactor. Mn(2+) is required as a cofactor.

The enzyme catalyses D-ribulose 5-phosphate = (2S)-2-hydroxy-3-oxobutyl phosphate + formate + H(+). It participates in cofactor biosynthesis; riboflavin biosynthesis; 2-hydroxy-3-oxobutyl phosphate from D-ribulose 5-phosphate: step 1/1. In terms of biological role, catalyzes the conversion of D-ribulose 5-phosphate to formate and 3,4-dihydroxy-2-butanone 4-phosphate. This Chlorobium limicola (strain DSM 245 / NBRC 103803 / 6330) protein is 3,4-dihydroxy-2-butanone 4-phosphate synthase.